We begin with the raw amino-acid sequence, 658 residues long: Threonine--tRNA ligase (658 aa).

Positions 1-64 (MSNTVSLQFP…GASGKVEIIT (64 aa)) constitute a TGS domain. The interval 246–548 (DHRRLGREMD…LIENFAGHMP (303 aa)) is catalytic. Zn(2+)-binding residues include cysteine 343, histidine 394, and histidine 525.

Belongs to the class-II aminoacyl-tRNA synthetase family. Homodimer. Requires Zn(2+) as cofactor.

The protein localises to the cytoplasm. The catalysed reaction is tRNA(Thr) + L-threonine + ATP = L-threonyl-tRNA(Thr) + AMP + diphosphate + H(+). Its function is as follows. Catalyzes the attachment of threonine to tRNA(Thr) in a two-step reaction: L-threonine is first activated by ATP to form Thr-AMP and then transferred to the acceptor end of tRNA(Thr). Also edits incorrectly charged L-seryl-tRNA(Thr). This Brucella melitensis biotype 2 (strain ATCC 23457) protein is Threonine--tRNA ligase.